Reading from the N-terminus, the 223-residue chain is DNA mismatch repair protein MutH (223 aa).

Belongs to the MutH family.

It localises to the cytoplasm. In terms of biological role, sequence-specific endonuclease that cleaves unmethylated GATC sequences. It is involved in DNA mismatch repair. This is DNA mismatch repair protein MutH from Shewanella sp. (strain W3-18-1).